Consider the following 316-residue polypeptide: 4-diphosphocytidyl-2-C-methyl-D-erythritol kinase (316 aa).

Lys-32 is a catalytic residue. 126–136 is a binding site for ATP; it reads PVGAGLGGGSA. Asp-168 is an active-site residue.

Belongs to the GHMP kinase family. IspE subfamily.

It carries out the reaction 4-CDP-2-C-methyl-D-erythritol + ATP = 4-CDP-2-C-methyl-D-erythritol 2-phosphate + ADP + H(+). It participates in isoprenoid biosynthesis; isopentenyl diphosphate biosynthesis via DXP pathway; isopentenyl diphosphate from 1-deoxy-D-xylulose 5-phosphate: step 3/6. In terms of biological role, catalyzes the phosphorylation of the position 2 hydroxy group of 4-diphosphocytidyl-2C-methyl-D-erythritol. The sequence is that of 4-diphosphocytidyl-2-C-methyl-D-erythritol kinase from Bifidobacterium longum (strain DJO10A).